Here is a 117-residue protein sequence, read N- to C-terminus: Large ribosomal subunit protein uL24 (117 aa).

The segment covering 1 to 12 (MSKKNSQTSPQR) has biased composition (polar residues). The interval 1–20 (MSKKNSQTSPQRQKMHVKKG) is disordered.

It belongs to the universal ribosomal protein uL24 family. In terms of assembly, part of the 50S ribosomal subunit.

Its function is as follows. One of two assembly initiator proteins, it binds directly to the 5'-end of the 23S rRNA, where it nucleates assembly of the 50S subunit. One of the proteins that surrounds the polypeptide exit tunnel on the outside of the subunit. This chain is Large ribosomal subunit protein uL24, found in Microcystis aeruginosa (strain NIES-843 / IAM M-2473).